Reading from the N-terminus, the 218-residue chain is GTP cyclohydrolase 1 (218 aa).

Zn(2+) is bound by residues cysteine 109, histidine 112, and cysteine 180.

It belongs to the GTP cyclohydrolase I family. As to quaternary structure, toroid-shaped homodecamer, composed of two pentamers of five dimers.

The catalysed reaction is GTP + H2O = 7,8-dihydroneopterin 3'-triphosphate + formate + H(+). Its pathway is cofactor biosynthesis; 7,8-dihydroneopterin triphosphate biosynthesis; 7,8-dihydroneopterin triphosphate from GTP: step 1/1. The sequence is that of GTP cyclohydrolase 1 from Histophilus somni (strain 129Pt) (Haemophilus somnus).